Reading from the N-terminus, the 84-residue chain is MAAEKIYEPYKKSRGTMIYTPTNQQMSRGGIGEKLADFVKNLYWVYYIHLPFYLMTSLDAFCLHTIFLVVVSLSLFGLLKYIFL.

A helical membrane pass occupies residues 63–83 (LHTIFLVVVSLSLFGLLKYIF).

The protein localises to the endoplasmic reticulum membrane. In terms of biological role, stimulates the activity of serine palmitoyltransferase (SPT), and thus plays a role in the biosynthesis of sphingolipids. This chain is Serine palmitoyltransferase-regulating protein TSC3 (TSC3), found in Kluyveromyces lactis (strain ATCC 8585 / CBS 2359 / DSM 70799 / NBRC 1267 / NRRL Y-1140 / WM37) (Yeast).